Reading from the N-terminus, the 179-residue chain is Adenine phosphoribosyltransferase (179 aa).

Belongs to the purine/pyrimidine phosphoribosyltransferase family. As to quaternary structure, homodimer.

It is found in the cytoplasm. It carries out the reaction AMP + diphosphate = 5-phospho-alpha-D-ribose 1-diphosphate + adenine. It participates in purine metabolism; AMP biosynthesis via salvage pathway; AMP from adenine: step 1/1. Functionally, catalyzes a salvage reaction resulting in the formation of AMP, that is energically less costly than de novo synthesis. The protein is Adenine phosphoribosyltransferase of Ruegeria pomeroyi (strain ATCC 700808 / DSM 15171 / DSS-3) (Silicibacter pomeroyi).